A 475-amino-acid polypeptide reads, in one-letter code: F-box protein SKIP22 (475 aa).

The tract at residues 114–133 (DQAKSNPNTSVEDPEGDISG) is disordered. The 47-residue stretch at 319–365 (PPCLMRLPTELKLKILELLPGVSIGNMACVCTEMRYLASDNDLWKQK) folds into the F-box domain.

Part of a SCF (ASK-cullin-F-box) protein ligase complex. Interacts with SKP1A/ASK1 and SPK1B/ASK2.

Its subcellular location is the nucleus. Its pathway is protein modification; protein ubiquitination. Component of SCF(ASK-cullin-F-box) E3 ubiquitin ligase complexes, which may mediate the ubiquitination and subsequent proteasomal degradation of target proteins. This chain is F-box protein SKIP22 (SKIP22), found in Arabidopsis thaliana (Mouse-ear cress).